The following is a 102-amino-acid chain: uncharacterized protein (102 aa).

This is an uncharacterized protein from Escherichia coli (Bacteriophage T4).